Reading from the N-terminus, the 137-residue chain is Seminal plasma sperm motility inhibitor (137 aa).

The N-terminal stretch at Met1–Thr21 is a signal peptide. A disulfide bond links Cys30 and Cys51. In terms of domain architecture, CUB spans Cys30–Ile131. The N-linked (GlcNAc...) asparagine glycan is linked to Asn36.

It belongs to the spermadhesin family. As to expression, seminal plasma or sperm.

Its subcellular location is the secreted. Functionally, inhibitor of sperm motility. In Sus scrofa (Pig), this protein is Seminal plasma sperm motility inhibitor (SPMI).